The chain runs to 483 residues: Cobyric acid synthase (483 aa).

Positions 252–439 (KLKVVVPVLT…LHGFLDSEAV (188 aa)) constitute a GATase cobBQ-type domain. The active-site Nucleophile is the cysteine 333. Residue histidine 431 is part of the active site.

It belongs to the CobB/CobQ family. CobQ subfamily.

The protein operates within cofactor biosynthesis; adenosylcobalamin biosynthesis. Its function is as follows. Catalyzes amidations at positions B, D, E, and G on adenosylcobyrinic A,C-diamide. NH(2) groups are provided by glutamine, and one molecule of ATP is hydrogenolyzed for each amidation. This is Cobyric acid synthase from Vibrio vulnificus (strain CMCP6).